A 300-amino-acid polypeptide reads, in one-letter code: F-box protein PP2-A15 (300 aa).

One can recognise an F-box domain in the interval 17–63 (MGPGLGDIPESCVACVFMYLTPPEICNLAGLNRSFRGAASSDSVWEK).

This chain is F-box protein PP2-A15 (PP2A15), found in Arabidopsis thaliana (Mouse-ear cress).